The following is a 488-amino-acid chain: Tetratricopeptide repeat protein 23 (488 aa).

TPR repeat units follow at residues 45-78 (LHLC…TRIC), 137-170 (LELF…SKEM), 186-219 (SRIK…TEIT), 228-261 (VQVL…TPQP), and 398-431 (AETY…ETFL).

As to quaternary structure, associated with the EvC complex composed of EFCAB7, IQCE, EVC2 and EVC.

The protein resides in the cell projection. The protein localises to the cilium. Functionally, participates positively in the ciliary Hedgehog (Hh) signaling. This is Tetratricopeptide repeat protein 23 (Ttc23) from Mus musculus (Mouse).